The following is a 307-amino-acid chain: Nitric oxide synthase-interacting protein homolog (307 aa).

The tract at residues 120–159 (PAMTPAHSSAAASEKPSTSSAAAAASSESSSASSISNMTN) is disordered. Low complexity predominate over residues 127-155 (SSAAASEKPSTSSAAAAASSESSSASSIS).

It belongs to the NOSIP family.

It localises to the cytoplasm. It is found in the nucleus. Functionally, negatively regulates nitric oxide production by inducing nitric oxide synthase translocation to actin cytoskeleton and inhibiting its enzymatic activity. The polypeptide is Nitric oxide synthase-interacting protein homolog (Drosophila melanogaster (Fruit fly)).